The primary structure comprises 37 residues: Large ribosomal subunit protein bL36 (37 aa).

Belongs to the bacterial ribosomal protein bL36 family.

The sequence is that of Large ribosomal subunit protein bL36 from Campylobacter jejuni subsp. jejuni serotype O:6 (strain 81116 / NCTC 11828).